Reading from the N-terminus, the 315-residue chain is Acetyl-coenzyme A carboxylase carboxyl transferase subunit alpha (315 aa).

In terms of domain architecture, CoA carboxyltransferase C-terminal spans 39 to 292; sequence LEDKSAKLLR…GDALEQELNG (254 aa).

The protein belongs to the AccA family. Acetyl-CoA carboxylase is a heterohexamer composed of biotin carboxyl carrier protein (AccB), biotin carboxylase (AccC) and two subunits each of ACCase subunit alpha (AccA) and ACCase subunit beta (AccD).

It localises to the cytoplasm. The enzyme catalyses N(6)-carboxybiotinyl-L-lysyl-[protein] + acetyl-CoA = N(6)-biotinyl-L-lysyl-[protein] + malonyl-CoA. It participates in lipid metabolism; malonyl-CoA biosynthesis; malonyl-CoA from acetyl-CoA: step 1/1. Component of the acetyl coenzyme A carboxylase (ACC) complex. First, biotin carboxylase catalyzes the carboxylation of biotin on its carrier protein (BCCP) and then the CO(2) group is transferred by the carboxyltransferase to acetyl-CoA to form malonyl-CoA. In Sphingopyxis alaskensis (strain DSM 13593 / LMG 18877 / RB2256) (Sphingomonas alaskensis), this protein is Acetyl-coenzyme A carboxylase carboxyl transferase subunit alpha.